Here is a 314-residue protein sequence, read N- to C-terminus: BURP domain-containing protein 8 (314 aa).

An N-terminal signal peptide occupies residues 1–16 (MDLVRLTSLLPPSVMG). Positions 98–314 (FFLEKDLFPG…PLGDMLWVRN (217 aa)) constitute a BURP domain.

In terms of tissue distribution, expressed in shoot and panicles.

This Oryza sativa subsp. japonica (Rice) protein is BURP domain-containing protein 8 (BURP8).